The following is a 335-amino-acid chain: UPF0065 protein BB4329 (335 aa).

The first 39 residues, 1–39, serve as a signal peptide directing secretion; it reads MNKNIPAFHRRCHGLVQGLARTLLLAPVLLALSVPAAQA.

This sequence belongs to the UPF0065 (bug) family.

Its subcellular location is the periplasm. This chain is UPF0065 protein BB4329, found in Bordetella bronchiseptica (strain ATCC BAA-588 / NCTC 13252 / RB50) (Alcaligenes bronchisepticus).